Consider the following 246-residue polypeptide: UDP-N-acetyl-D-mannosaminuronic acid transferase (246 aa).

The protein belongs to the glycosyltransferase 26 family.

The enzyme catalyses UDP-N-acetyl-alpha-D-mannosaminouronate + N-acetyl-alpha-D-glucosaminyl-di-trans,octa-cis-undecaprenyl diphosphate = beta-D-ManNAcA-(1-&gt;4)-alpha-D-GlcNAc-di-trans,octa-cis-undecaprenyl diphosphate + UDP + H(+). Its pathway is bacterial outer membrane biogenesis; enterobacterial common antigen biosynthesis. Functionally, catalyzes the synthesis of Und-PP-GlcNAc-ManNAcA (Lipid II), the second lipid-linked intermediate involved in enterobacterial common antigen (ECA) synthesis. The polypeptide is UDP-N-acetyl-D-mannosaminuronic acid transferase (Escherichia coli O1:K1 / APEC).